The sequence spans 430 residues: SH3 domain-containing protein PJ696.02 (430 aa).

The tract at residues 237 to 372 (EPEDIWGPSS…KPKFKQDSLG (136 aa)) is disordered. Over residues 263–277 (RRGDSYRSNRSRAHD) the composition is skewed to basic and acidic residues. Ser-285 bears the Phosphoserine mark. Over residues 304 to 313 (SKMDNRRSKY) the composition is skewed to basic and acidic residues. Thr-316 carries the post-translational modification Phosphothreonine. 2 positions are modified to phosphoserine: Ser-318 and Ser-324. At Tyr-325 the chain carries Phosphotyrosine. 3 positions are modified to phosphoserine: Ser-326, Ser-354, and Ser-406. The span at 333 to 358 (VYSSDVSTESSSQFSSRSSEYSKPSR) shows a compositional bias: low complexity. Residues 371-430 (LGPNQARAMYSFAGEQPGDLSFQKGDIIDIVERSGSHDDWWTGRIGYREGIFPANYVKLS) enclose the SH3 domain.

This sequence belongs to the SH3YL1 family.

The chain is SH3 domain-containing protein PJ696.02 from Schizosaccharomyces pombe (strain 972 / ATCC 24843) (Fission yeast).